The following is a 148-amino-acid chain: Protein-arginine-phosphatase (148 aa).

Residue cysteine 9 is the Nucleophile of the active site. Substrate is bound at residue 10–15; the sequence is TGNTCR. Residue arginine 15 is part of the active site. The active-site Proton donor is the aspartate 117.

The protein belongs to the low molecular weight phosphotyrosine protein phosphatase family. Is present in solution as a mixture of monomers, dimers and higher order oligomers (trimers and tetramers).

The catalysed reaction is N(omega)-phospho-L-arginyl-[protein] + H2O = L-arginyl-[protein] + phosphate. With respect to regulation, irreversibly inhibited by the synthetic inhibitor cyc-SeCN-amidine, which inactivates the enzyme by inducing disulfide bond formation between the two active site cysteine residues Cys-9 and Cys-14. Its function is as follows. Catalyzes the specific dephosphorylation of phosphoarginine residues in proteins. Probably counteracts the protein arginine kinase McsB in vivo. Exhibits almost no activity against pTyr peptides. Protein arginine phosphorylation has a physiologically important role and is involved in the regulation of many critical cellular processes, such as protein homeostasis, motility, competence, and stringent and stress responses, by regulating gene expression and protein activity. This Geobacillus stearothermophilus (Bacillus stearothermophilus) protein is Protein-arginine-phosphatase (ywle).